A 397-amino-acid chain; its full sequence is Phosphoglycerate kinase (397 aa).

Residues 21-23 (DFN), Arg-37, 60-63 (HLGR), Arg-119, and Arg-152 each bind substrate. ATP-binding positions include Lys-203, Gly-294, Glu-325, and 354 to 357 (GGDS).

It belongs to the phosphoglycerate kinase family. As to quaternary structure, monomer.

It localises to the cytoplasm. It catalyses the reaction (2R)-3-phosphoglycerate + ATP = (2R)-3-phospho-glyceroyl phosphate + ADP. The protein operates within carbohydrate degradation; glycolysis; pyruvate from D-glyceraldehyde 3-phosphate: step 2/5. This is Phosphoglycerate kinase from Chlorobium phaeobacteroides (strain BS1).